We begin with the raw amino-acid sequence, 821 residues long: Calpain-3 (821 aa).

The disordered stretch occupies residues 1-34 (MPTVISASMAPRTGASQVPRTMPQAAQGKGTEAG). The Calpain catalytic domain occupies 73–417 (LYLDPEFPPD…FTKLEICNLT (345 aa)). Residues Cys128, His334, and Asn358 contribute to the active site. The interval 418 to 586 (ADALESDKLQ…KRNLSEEVEN (169 aa)) is domain III. Residues 587–649 (TISVDRPVRK…EPSNTDQESE (63 aa)) are linker. Residues 603–652 (IFVSDRANSNKELGVDQESEEGQDKTSPDKQEKSPKPEPSNTDQESEEQQ) are disordered. Basic and acidic residues predominate over residues 624 to 638 (GQDKTSPDKQEKSPK). Positions 641-652 (PSNTDQESEEQQ) are enriched in polar residues. EF-hand domains lie at 649 to 683 (EEQQQFRNIFRQIAGDDMEICADELKNVLNRVVNK), 692 to 725 (FTLESCRSMIALMDTDGSGRLNLQEFHHLWKKIK), 722 to 757 (KKIKSWQKIFKHYDTDQSGTINSYEMRNAVNDAGFH), and 787 to 821 (VRLEGMFRAFNAFDKDGDGIIKLNVLEWLQLTMYA). The tract at residues 650–821 (EQQQFRNIFR…LEWLQLTMYA (172 aa)) is domain IV. Ca(2+) contacts are provided by Ala662, Asp665, Glu667, Glu672, Asp705, Asp707, Ser709, Arg711, Glu716, Asp735, Asp737, Ser739, Thr741, Glu746, Asp800, Asp802, Asp804, and Ile806.

Belongs to the peptidase C2 family. Homodimer; via EF-hand domain 4. Interacts with TTN/titin. Interacts with CMYA5; this interaction, which results in CMYA5 proteolysis, may protect CAPN3 from autolysis. Interacts with SIMC1. Interacts with UTP25; the interaction is required for CAPN3 translocation to the nucleolus. In terms of tissue distribution, skeletal muscle.

The protein localises to the cytoplasm. It localises to the nucleus. Its subcellular location is the nucleolus. It carries out the reaction Broad endopeptidase activity.. Its activity is regulated as follows. Activated by micromolar concentrations of calcium and inhibited by calpastatin. Functionally, calcium-regulated non-lysosomal thiol-protease. Proteolytically cleaves CTBP1. Mediates, with UTP25, the proteasome-independent degradation of p53/TP53. This is Calpain-3 (CAPN3) from Sus scrofa (Pig).